The sequence spans 379 residues: Zinc finger protein 883 (379 aa).

13 consecutive C2H2-type zinc fingers follow at residues 13–35 (YLCTECGKGYTCLASLTQHQKTH), 41–63 (YECKICGKSFTRNSNLVQHQRIH), 69–91 (YECNECGKAFSQSTNLIQHQRVH), 97–119 (YECNECEKTFSHRSSLRNHERIH), 125–147 (YPCNECGKAFSHISALTQHHRIH), 153–175 (YECTECGKTFSRSTHLIEHQGIH), 181–203 (YQCKQCRKVFCHSTSLIRHQRTH), 209–231 (YECNECGKAFSHTPAFIQHQRIH), 237–259 (YECNACGKAFNRSAHLTEHQRTH), 265–287 (YVCKECGKTFSRSTHLTEHLKIH), 293–315 (YQCNECQKLFCYRTSLIRHQRTH), 321–343 (YQCNECGKSFSLSSALTKHKRIH), and 349–371 (YQCTKCGDVFCHSTSLIRHQKTH).

Belongs to the krueppel C2H2-type zinc-finger protein family.

It is found in the nucleus. Its function is as follows. May be involved in transcriptional regulation. This is Zinc finger protein 883 (ZNF883) from Homo sapiens (Human).